The primary structure comprises 542 residues: Heterogeneous nuclear ribonucleoprotein L-like (542 aa).

The interval Met1–Lys71 is disordered. The segment covering Tyr18 to Glu29 has biased composition (basic and acidic residues). Lys26 participates in a covalent cross-link: Glycyl lysine isopeptide (Lys-Gly) (interchain with G-Cter in SUMO2). A Phosphoserine modification is found at Ser35. Thr46 bears the Phosphothreonine mark. A compositionally biased stretch (gly residues) spans Arg48 to Arg58. Residues Ser59, Ser68, and Ser75 each carry the phosphoserine modification. 3 consecutive RRM domains span residues Pro76–Ser150, Asn166–Pro244, and Ser335–Gln409. Residue Lys491 forms a Glycyl lysine isopeptide (Lys-Gly) (interchain with G-Cter in SUMO2) linkage.

As to quaternary structure, interacts with HNRNPL. In terms of tissue distribution, widely expressed. Detected in bone marrow stroma cells, skeletal muscle, heart, placenta, pancreas, kidney and lung.

Functionally, RNA-binding protein that functions as a regulator of alternative splicing for multiple target mRNAs, including PTPRC/CD45 and STAT5A. Required for alternative splicing of PTPRC. This is Heterogeneous nuclear ribonucleoprotein L-like (HNRNPLL) from Homo sapiens (Human).